The primary structure comprises 343 residues: Anthranilate phosphoribosyltransferase (343 aa).

5-phospho-alpha-D-ribose 1-diphosphate contacts are provided by residues Gly84, 87–88 (GD), Thr92, 94–97 (NIST), 112–120 (KHGNRSASS), and Ser124. Anthranilate is bound at residue Gly84. Ser96 contributes to the Mg(2+) binding site. Asn115 lines the anthranilate pocket. Position 170 (Arg170) interacts with anthranilate. Residues Asp229 and Glu230 each coordinate Mg(2+).

The protein belongs to the anthranilate phosphoribosyltransferase family. In terms of assembly, homodimer. It depends on Mg(2+) as a cofactor.

The enzyme catalyses N-(5-phospho-beta-D-ribosyl)anthranilate + diphosphate = 5-phospho-alpha-D-ribose 1-diphosphate + anthranilate. Its pathway is amino-acid biosynthesis; L-tryptophan biosynthesis; L-tryptophan from chorismate: step 2/5. Functionally, catalyzes the transfer of the phosphoribosyl group of 5-phosphorylribose-1-pyrophosphate (PRPP) to anthranilate to yield N-(5'-phosphoribosyl)-anthranilate (PRA). This chain is Anthranilate phosphoribosyltransferase, found in Bordetella pertussis (strain Tohama I / ATCC BAA-589 / NCTC 13251).